The sequence spans 646 residues: Beta-galactosidase-1-like protein (646 aa).

An N-terminal signal peptide occupies residues 1-23 (MPPDLPSLLLRLVVLLLLSQAEA). N-linked (GlcNAc...) asparagine glycosylation occurs at N93. E182 (proton donor) is an active-site residue. Residue N239 is glycosylated (N-linked (GlcNAc...) asparagine). The active-site Nucleophile is E260.

This sequence belongs to the glycosyl hydrolase 35 family.

It localises to the secreted. Functionally, probable glycosyl hydrolase. In Mus musculus (Mouse), this protein is Beta-galactosidase-1-like protein (Glb1l).